Consider the following 199-residue polypeptide: Superoxide dismutase [Mn/Fe] 2 (199 aa).

Residues H27, H81, D161, and H165 each contribute to the Fe(3+) site. Residues H27, H81, D161, and H165 each contribute to the Mn(2+) site.

The protein belongs to the iron/manganese superoxide dismutase family. In terms of assembly, homodimer. Can also form a heterodimer with SodA. Mn(2+) serves as cofactor. Fe(3+) is required as a cofactor.

It catalyses the reaction 2 superoxide + 2 H(+) = H2O2 + O2. Destroys superoxide anion radicals which are normally produced within the cells and which are toxic to biological systems. Catalyzes the dismutation of superoxide anion radicals into O2 and H2O2 by successive reduction and oxidation of the transition metal ion at the active site. The sequence is that of Superoxide dismutase [Mn/Fe] 2 (sodM) from Staphylococcus aureus (strain USA300).